The primary structure comprises 48 residues: Delta-actitoxin-Bgr2b (48 aa).

3 cysteine pairs are disulfide-bonded: cysteine 4–cysteine 45, cysteine 6–cysteine 35, and cysteine 28–cysteine 46.

Belongs to the sea anemone sodium channel inhibitory toxin family. Type I subfamily.

It localises to the secreted. The protein localises to the nematocyst. Binds voltage-dependently at site 3 of sodium channels (Nav) and inhibits the inactivation of the activated channels, thereby blocking neuronal transmission. Has effect on SCN4A/SCN1B, and SCN5A/SCN1B, has no effect on SCN2A/SCN1B, and SCN10A/SCN1B. Possesses the highest efficacy for the insect sodium channel para/tipE. Also interacts with sodium channels in cardiac cells. Shows lethality to crabs. In Bunodosoma granuliferum (Red warty sea anemone), this protein is Delta-actitoxin-Bgr2b.